The following is a 208-amino-acid chain: FAS-associated death domain protein (208 aa).

One can recognise a DED domain in the interval 3 to 81; sequence PFLVLLHSVS…RHDLLRRVDD (79 aa). A Death domain is found at 97–181; that stretch reads LCAAFNVICD…LVADLVQEVQ (85 aa). The (Microbial infection) N-beta-linked (GlcNAc) arginine glycan is linked to Arg117. Residues 187-208 are disordered; that stretch reads QNRSGAMSPMSWNSDASTSEAS. Ser194 is subject to Phosphoserine.

In terms of assembly, can self-associate. Component of the AIM2 PANoptosome complex, a multiprotein complex that drives inflammatory cell death (PANoptosis). Component of the death-induced signaling complex (DISC) composed of cell surface receptor FAS/CD95 or TNFRSF1A, adapter protein FADD and the CASP8 protease; recruitment of CASP8 to the complex is required for processing of CASP8 into the p18 and p10 subunits. Interacts (via death domain) with FAS (via death domain). Interacts directly (via DED domain) with NOL3 (via CARD domain); inhibits death-inducing signaling complex (DISC) assembly by inhibiting the increase in FAS-FADD binding induced by FAS activation. Interacts with CFLAR, PEA15 and MBD4. When phosphorylated, part of a complex containing HIPK3 and FAS. May interact with MAVS/IPS1. Interacts with MOCV v-CFLAR protein and PIDD1. Interacts with RIPK1 and TRADD. Interacts with stimulated TNFRSF10B. Interacts with DDX24. As to quaternary structure, (Microbial infection) Interacts with human papillomavirus 16/HPV16 protein E6. (Microbial infection) Interacts with molluscum contagiosum virus proteins MC159L/v-CFLAR and MC160L. In terms of processing, (Microbial infection) Glycosylated at Arg-117 by enteropathogenic E.coli protein NleB1, C.rodentium protein NleB and S.typhimurium protein Ssek1: arginine GlcNAcylation prevents recruitment of caspase-8 or caspase-10 to the activated Fas (CD95) or TNFR-1 receptors. Expressed in a wide variety of tissues, except for peripheral blood mononuclear leukocytes.

It is found in the cytoplasm. Apoptotic adapter molecule that recruits caspases CASP8 or CASP10 to the activated FAS/CD95 or TNFRSF1A/TNFR-1 receptors. The resulting aggregate called the death-inducing signaling complex (DISC) performs CASP8 proteolytic activation. Active CASP8 initiates the subsequent cascade of caspases mediating apoptosis. Involved in interferon-mediated antiviral immune response, playing a role in the positive regulation of interferon signaling. This is FAS-associated death domain protein from Homo sapiens (Human).